The sequence spans 342 residues: Ferredoxin--NADP reductase (342 aa).

Residues Cys-17, Asp-36, Gln-44, Tyr-49, Val-89, Phe-124, Asp-289, and Thr-330 each contribute to the FAD site.

Belongs to the ferredoxin--NADP reductase type 2 family. As to quaternary structure, homodimer. Requires FAD as cofactor.

The catalysed reaction is 2 reduced [2Fe-2S]-[ferredoxin] + NADP(+) + H(+) = 2 oxidized [2Fe-2S]-[ferredoxin] + NADPH. This Nitrobacter hamburgensis (strain DSM 10229 / NCIMB 13809 / X14) protein is Ferredoxin--NADP reductase.